The chain runs to 116 residues: Large ribosomal subunit protein bL17 (116 aa).

It belongs to the bacterial ribosomal protein bL17 family. Part of the 50S ribosomal subunit. Contacts protein L32.

This chain is Large ribosomal subunit protein bL17, found in Gloeobacter violaceus (strain ATCC 29082 / PCC 7421).